The primary structure comprises 78 residues: Large ribosomal subunit protein eL38 (78 aa).

Belongs to the eukaryotic ribosomal protein eL38 family. In terms of assembly, component of the large ribosomal subunit. Mature ribosomes consist of a small (40S) and a large (60S) subunit. The 40S subunit contains about 32 different proteins and 1 molecule of RNA (18S). The 60S subunit contains 45 different proteins and 3 molecules of RNA (25S, 5.8S and 5S).

It is found in the cytoplasm. Functionally, component of the ribosome, a large ribonucleoprotein complex responsible for the synthesis of proteins in the cell. The small ribosomal subunit (SSU) binds messenger RNAs (mRNAs) and translates the encoded message by selecting cognate aminoacyl-transfer RNA (tRNA) molecules. The large subunit (LSU) contains the ribosomal catalytic site termed the peptidyl transferase center (PTC), which catalyzes the formation of peptide bonds, thereby polymerizing the amino acids delivered by tRNAs into a polypeptide chain. The nascent polypeptides leave the ribosome through a tunnel in the LSU and interact with protein factors that function in enzymatic processing, targeting, and the membrane insertion of nascent chains at the exit of the ribosomal tunnel. The protein is Large ribosomal subunit protein eL38 of Candida albicans (strain SC5314 / ATCC MYA-2876) (Yeast).